The primary structure comprises 296 residues: Putative thiosulfate sulfurtransferase SseA (296 aa).

2 consecutive Rhodanese domains span residues 31–138 (GKPG…DTSL) and 168–286 (ILGT…VPIT). The active-site Cysteine persulfide intermediate is the Cys245. Arg250 contacts substrate.

The catalysed reaction is thiosulfate + hydrogen cyanide = thiocyanate + sulfite + 2 H(+). The protein is Putative thiosulfate sulfurtransferase SseA (sseA) of Mycobacterium leprae (strain TN).